We begin with the raw amino-acid sequence, 131 residues long: Con-Ins Q1 (131 aa).

An N-terminal signal peptide occupies residues 1 to 24; it reads MTTSSYFLLVALGLLLYLCQSSFG. Cystine bridges form between Cys29/Cys107, Cys41/Cys110, Cys53/Cys123, and Cys109/Cys114. Positions 59 to 92 are cleaved as a propeptide — c peptide; that stretch reads LQGGTDDARKKRGRASLLRKRRGFLSMLKARAKR. A 4-carboxyglutamate; partial modification is found at Glu118. Ser130 is subject to Serine amide.

This sequence belongs to the insulin family. Heterodimer of A and B chains; disulfide-linked. Expressed by the venom gland.

It localises to the secreted. Functionally, this venom insulin facilitates prey capture by rapidly inducing hypoglycemic shock. Intraperitoneal injection of this peptide into zebrafish lowers blood glucose with the same potency than human insulin. In vivo, when applied to water, this peptide reduces overall locomotor activity of zebrafish larvae, observed as a significant decrease in the percentage of time spent swimming and movement frequency. The chain is Con-Ins Q1 from Conus quercinus (Oak cone).